Here is a 417-residue protein sequence, read N- to C-terminus: Serine hydroxymethyltransferase (417 aa).

(6S)-5,6,7,8-tetrahydrofolate-binding positions include leucine 121 and 125–127 (GHL). Lysine 229 bears the N6-(pyridoxal phosphate)lysine mark. 355–357 (SPF) serves as a coordination point for (6S)-5,6,7,8-tetrahydrofolate.

It belongs to the SHMT family. In terms of assembly, homodimer. Pyridoxal 5'-phosphate is required as a cofactor.

Its subcellular location is the cytoplasm. The catalysed reaction is (6R)-5,10-methylene-5,6,7,8-tetrahydrofolate + glycine + H2O = (6S)-5,6,7,8-tetrahydrofolate + L-serine. Its pathway is one-carbon metabolism; tetrahydrofolate interconversion. It functions in the pathway amino-acid biosynthesis; glycine biosynthesis; glycine from L-serine: step 1/1. Catalyzes the reversible interconversion of serine and glycine with tetrahydrofolate (THF) serving as the one-carbon carrier. This reaction serves as the major source of one-carbon groups required for the biosynthesis of purines, thymidylate, methionine, and other important biomolecules. Also exhibits THF-independent aldolase activity toward beta-hydroxyamino acids, producing glycine and aldehydes, via a retro-aldol mechanism. This is Serine hydroxymethyltransferase from Yersinia enterocolitica serotype O:8 / biotype 1B (strain NCTC 13174 / 8081).